Reading from the N-terminus, the 477-residue chain is MSFVWSAAVWVIAVAAVVISKWLYRWSNPKCNGKLPPGSMGLPIIGETCDFFEPHGLYEISPFVKKRMLKYGPLFRTNIFGSNTVVLTEPDIIFEVFRQENKSFVFSYPEAFVKPFGKENVFLKHGNIHKHVKQISLQHLGSEALKKKMIGEIDRVTYEHLRSKANQGSFDAKEAVESVIMAHLTPKIISNLKPETQATLVDNIMALGSEWFQSPLKLTTLISIYKVFIARRYALQVIKDVFTRRKASREMCGDFLDTMVEEGEKEDVIFNEESAINLIFAILVVAKESTSSVTSLAIKFLAENHKALAELKREHAAILQNRNGKGAGVSWEEYRHQMTFTNMVINETLRMANMAPIMYRKAVNDVEIKGYTIPAGWIVAVIPPAVHFNDAIYENPLEFNPWRWEGKELRSGSKTFMVFGGGVRQCVGAEFARLQISIFIHHLVTTYDFSLAQESEFIRAPLPYFPKGLPIKISQSL.

Residues 3 to 23 traverse the membrane as a helical segment; that stretch reads FVWSAAVWVIAVAAVVISKWL. Residue Cys-426 coordinates heme.

This sequence belongs to the cytochrome P450 family. The cofactor is heme. Expressed primarily in the root epidermis.

It localises to the membrane. Its function is as follows. Hydroxylates thalianol into thalian-diol. The protein is Cytochrome P450 708A2 (CYP708A2) of Arabidopsis thaliana (Mouse-ear cress).